A 267-amino-acid chain; its full sequence is Geranylgeranylglyceryl phosphate synthase (267 aa).

Asp23 and Ser52 together coordinate Mg(2+). Residues 173-179 (YLEAGSG), 205-206 (GG), and 227-228 (GT) contribute to the sn-glycerol 1-phosphate site.

The protein belongs to the GGGP/HepGP synthase family. Group II subfamily. Mg(2+) is required as a cofactor.

It localises to the cytoplasm. The enzyme catalyses sn-glycerol 1-phosphate + (2E,6E,10E)-geranylgeranyl diphosphate = sn-3-O-(geranylgeranyl)glycerol 1-phosphate + diphosphate. Its pathway is membrane lipid metabolism; glycerophospholipid metabolism. In terms of biological role, prenyltransferase that catalyzes the transfer of the geranylgeranyl moiety of geranylgeranyl diphosphate (GGPP) to the C3 hydroxyl of sn-glycerol-1-phosphate (G1P). This reaction is the first ether-bond-formation step in the biosynthesis of archaeal membrane lipids. The sequence is that of Geranylgeranylglyceryl phosphate synthase from Caldivirga maquilingensis (strain ATCC 700844 / DSM 13496 / JCM 10307 / IC-167).